The sequence spans 46 residues: KECMTDETVCYIHNHNDCCGSCLCLNGPIARPWEMMVGNCKCGPKA.

4 cysteine pairs are disulfide-bonded: cysteine 3/cysteine 19, cysteine 10/cysteine 22, cysteine 18/cysteine 42, and cysteine 24/cysteine 40. The keys region for toxin activity stretch occupies residues arginine 31–tryptophan 33.

Belongs to the neurotoxin 16 (SFI) family. In terms of tissue distribution, expressed by the venom gland.

Its subcellular location is the secreted. Insecticidal toxin. It inhibits insect voltage-gated sodium channels (Nav) by partially blocking the channel pore in DUM neurons from the American cockroach, not by acting as a gating modifier. The inhibition is only partially reversible after prolonged washout. In vivo, the toxin causes flaccid paralysis followed by death when injected into Heliothis virescens larvae. It also causes uncoordinated movements followed by full paralysis to sheep blowflies (Lucilia cuprina). When the toxin is fused to snowdrop lectin, it is orally active against larvae of the tomato moth (Laconobia oleracea), the rice brown planthopper (Nilaparvata lugens), and the peach-potato aphid (Myzus persicae). The chain is Mu-segestritoxin-Sf1f from Segestria florentina (Tube-web spider).